We begin with the raw amino-acid sequence, 327 residues long: Tetraacyldisaccharide 4'-kinase (327 aa).

An ATP-binding site is contributed by 58 to 65 (TVGGTGKT).

It belongs to the LpxK family.

The catalysed reaction is a lipid A disaccharide + ATP = a lipid IVA + ADP + H(+). It participates in glycolipid biosynthesis; lipid IV(A) biosynthesis; lipid IV(A) from (3R)-3-hydroxytetradecanoyl-[acyl-carrier-protein] and UDP-N-acetyl-alpha-D-glucosamine: step 6/6. Functionally, transfers the gamma-phosphate of ATP to the 4'-position of a tetraacyldisaccharide 1-phosphate intermediate (termed DS-1-P) to form tetraacyldisaccharide 1,4'-bis-phosphate (lipid IVA). The chain is Tetraacyldisaccharide 4'-kinase from Alcanivorax borkumensis (strain ATCC 700651 / DSM 11573 / NCIMB 13689 / SK2).